The following is a 434-amino-acid chain: MGSPTWLQGEKSSPNARGQHSPGFCPSGPQPCPKPRGPQPCPKPRGPQPCPKPRGPQPCTPALLWAPHRLEGLSQSQDGLLPTSPCFVSGTEAPTACGPCIDIESGSPHRYEASEESSDSDVELVRPRQVKRRRLLPGTVPASVSVYSNKVNSSLKLPPDNSKALLQMSELHSIRGSEDVESEIVPPVTQQKPPTKELTDSETDETEPPNTERLRTGSPSPPPTPKTPVRRKGRAYNKIREMDARLRDLGTVLSPGQKVTTEENDVIVVGSSPAPELTVKVRRGGKLFRINLAMWDPLEKLAQSMASQLNVEPSRILLLLGDEELNKSQTPKSMNLTVADIIDCVVLSPPDGQEDSDPNEKICIKVQGKEKQSHLSVMVGKVEPLQSLMDQYQAAMGLTKKHKVSFFFEGQKLKGKNTAEELGLESDDIIEVWA.

Disordered stretches follow at residues 1–63 and 176–237; these read MGSP…TPAL and GSED…RAYN. Residues 28–59 show a composition bias toward pro residues; the sequence is GPQPCPKPRGPQPCPKPRGPQPCPKPRGPQPC. Residues 228–237 show a composition bias toward basic residues; it reads PVRRKGRAYN. Positions 275–351 constitute a Ubiquitin-like domain; the sequence is PELTVKVRRG…IDCVVLSPPD (77 aa).

It localises to the nucleus. It is found in the cytoplasm. Regulates the magnitude of NFAT-driven transcription of a specific subset of cytokine genes. In Xenopus tropicalis (Western clawed frog), this protein is NFATC2-interacting protein (nfatc2ip).